Consider the following 341-residue polypeptide: 4-hydroxy-2-oxovalerate aldolase (341 aa).

Residues 9-259 (VRITEVCLRD…KLDIDLYKMM (251 aa)) enclose the Pyruvate carboxyltransferase domain. Residue 17–18 (RD) coordinates substrate. Asp-18 is a Mn(2+) binding site. His-21 (proton acceptor) is an active-site residue. The substrate site is built by Ser-171 and His-198. 2 residues coordinate Mn(2+): His-198 and His-200. Tyr-289 serves as a coordination point for substrate.

It belongs to the 4-hydroxy-2-oxovalerate aldolase family.

It catalyses the reaction (S)-4-hydroxy-2-oxopentanoate = acetaldehyde + pyruvate. This is 4-hydroxy-2-oxovalerate aldolase from Bacillus thuringiensis (strain Al Hakam).